The sequence spans 1050 residues: Ankyrin repeat domain-containing protein 27 (1050 aa).

Positions 1 to 372 (MALYDEDLLK…RQGSLSAKPP (372 aa)) are sufficient for GEF activity towards RAB21. In terms of domain architecture, VPS9 spans 233-371 (ASEDAAFNKI…IRQGSLSAKP (139 aa)). ANK repeat units lie at residues 396–426 (SPTD…DKDT), 462–491 (RGHT…MVNA), 495–524 (HGAT…SAEV), 528–560 (NGNT…RLDI), 564–593 (KGDT…STEI), and 597–627 (LKET…RQKS). A sufficient for interaction with VPS29 region spans residues 396 to 460 (SPTDCLFKHI…PSVVTPFSRD (65 aa)). The interaction with RAB38 stretch occupies residues 451-600 (PSVVTPFSRD…TEIQNRLKET (150 aa)). Residues 451–730 (PSVVTPFSRD…APAQKRLAKV (280 aa)) are interaction with RAB32. Residues 625 to 665 (QKSSEAPVQSPQRSVDSISQESSTSSFSSMSASSRQEETKK) are disordered. Over residues 628-637 (SEAPVQSPQR) the composition is skewed to polar residues. The segment covering 638–658 (SVDSISQESSTSSFSSMSASS) has biased composition (low complexity). Positions 658 to 707 (SRQEETKKDYREVEKLLRAVADGDLEMVRYLLEWTEEDLEDAEDTVSAAD) are required for interaction with VAMP7. ANK repeat units follow at residues 668–698 (REVE…DLED), 743–772 (DGSS…NAGA), 776–805 (DQAV…KPNK), 809–838 (SGNT…SINA), and 842–871 (KGNT…SVQV). A sufficient for interaction with VPS29 region spans residues 692-746 (TEEDLEDAEDTVSAADPEFCHPLCQCPKCAPAQKRLAKVPASGLGVNVTSQDGSS). A phosphoserine mark is found at S962 and S970. A disordered region spans residues 987–1050 (PAQSGSHAAE…TPQEVSASRS (64 aa)). A compositionally biased stretch (basic and acidic residues) spans 994-1004 (AAEKGNSDWPE). Position 1023 is a phosphothreonine (T1023). Residues 1040–1050 (STPQEVSASRS) show a composition bias toward polar residues.

Interacts with RAB21 (GDP-bound form), VPS29, RAB32 (GTP-bound form), RAB38 (GTP-bound form), VAMP7, KIF5A, KIF5C, GOLGA4. Interacts with low affinity with RAB5. ANKRD27:RAB32 heterodimers can homodimerize to form tetramers. Can interact with RAB38 or RAB32, VPS29 and VAMP7 simultaneously. A decreased interaction with RAB32 seen in the presence of SGSM2.

It localises to the early endosome. The protein localises to the late endosome. It is found in the cytoplasmic vesicle membrane. Its subcellular location is the lysosome. The protein resides in the cell membrane. It localises to the melanosome. Functionally, may be a guanine exchange factor (GEF) for Rab21, Rab32 and Rab38 and regulate endosome dynamics. May regulate the participation of VAMP7 in membrane fusion events; in vitro inhibits VAMP7-mediated SNARE complex formation by trapping VAMP7 in a closed, fusogenically inactive conformation. Involved in peripheral melanosomal distribution of TYRP1 in melanocytes; the function, which probably is implicating vesicle-trafficking, includes cooperation with Rab32, Rab38 and VAMP7. Involved in the regulation of neurite growth; the function seems to require its GEF activity, probably towards Rab21, and VAMP7 but not Rab32/38. Proposed to be involved in Golgi sorting of VAMP7 and transport of VAMP7 vesicles to the cell surface; the function seems to implicate kinesin heavy chain isoform 5 proteins, GOLGA4, RAB21 and MACF1. Required for the colocalization of VAMP7 and Rab21, probably on TGN sites. Involved in GLUT1 endosome-to-plasma membrane trafficking; the function is dependent of association with VPS29. Regulates the proper trafficking of melanogenic enzymes TYR, TYRP1 and DCT/TYRP2 to melanosomes in melanocytes. This is Ankyrin repeat domain-containing protein 27 (ANKRD27) from Homo sapiens (Human).